The chain runs to 406 residues: MNSAGADEIGKLFVGGLDWSTTQETLRSYFSQYGEVVDCVIMKDKTTNQSRGFGFVKFKDPNCVGTVLASRPHTLDGRNIDPKPCTPRGMQPERTRPKEGWQKGPRSDSSKSNKIFVGGIPHNCGETELREYFKKFGVVTEVVMIYDAEKQRPRGFGFITFEDEQSVDQAVNMHFHDIMGKKVEVKRAEPRDSKNQAPGQPGASQWGSRVAPSAANGWAGQPPPTWQQGYGPQGMWVPAGQAIGGYGPPPAGRGAPPPPPPFTSYIVSTPPGGFPPPQGFPQGYGAPPQFSFGYGPPPPPPDQFAPPGVPPPPATPGAAPLAFPPPPSQAAPDMSKPPTAQPDFPYGQYGYGQDLSGFGQGFSDPSQQPPSYGGPSVPGSGGPPAGGSGFGRGQNHNVQGFHPYRR.

Met-1 carries the N-acetylmethionine modification. RRM domains are found at residues 10-97 and 113-190; these read GKLF…RTRP and NKIF…RAEP. The disordered stretch occupies residues 74-117; sequence TLDGRNIDPKPCTPRGMQPERTRPKEGWQKGPRSDSSKSNKIFV. Residues 91–111 are compositionally biased toward basic and acidic residues; the sequence is QPERTRPKEGWQKGPRSDSSK. Lys-150 carries the post-translational modification N6-acetyllysine. A disordered region spans residues 186–406; sequence KRAEPRDSKN…NVQGFHPYRR (221 aa). Residues 195–207 are compositionally biased toward polar residues; that stretch reads NQAPGQPGASQWG. The span at 247-262 shows a compositional bias: pro residues; it reads GPPPAGRGAPPPPPPF. Arg-253 carries the post-translational modification Omega-N-methylarginine. The segment covering 280–294 has biased composition (low complexity); sequence FPQGYGAPPQFSFGY. A compositionally biased stretch (pro residues) spans 295 to 315; the sequence is GPPPPPPDQFAPPGVPPPPAT. The span at 363 to 378 shows a compositional bias: low complexity; the sequence is SDPSQQPPSYGGPSVP. Residues 379-392 are compositionally biased toward gly residues; the sequence is GSGGPPAGGSGFGR.

In terms of assembly, interacts with DAZ and DAZL. Post-translationally, acetylation at Lys-150 is predominantly observed in the nuclear fraction, and may regulate nucleocytoplasmic transport. In terms of tissue distribution, mainly expressed in testis. Expressed at much lower level in liver, heart and brain. Also expressed in ovary. Expressed throughout testes development, in both the prenatal and postnatal periods.

It is found in the cytoplasm. The protein localises to the nucleus. RNA-binding protein, which may be required during spermatogenesis. This chain is DAZ-associated protein 1 (Dazap1), found in Mus musculus (Mouse).